A 160-amino-acid polypeptide reads, in one-letter code: Ureidoglycolate lyase (160 aa).

It belongs to the ureidoglycolate lyase family. As to quaternary structure, homodimer. The cofactor is Ni(2+).

The enzyme catalyses (S)-ureidoglycolate = urea + glyoxylate. Its pathway is nitrogen metabolism; (S)-allantoin degradation. In terms of biological role, catalyzes the catabolism of the allantoin degradation intermediate (S)-ureidoglycolate, generating urea and glyoxylate. Involved in the utilization of allantoin as nitrogen source. In Salmonella gallinarum (strain 287/91 / NCTC 13346), this protein is Ureidoglycolate lyase.